We begin with the raw amino-acid sequence, 347 residues long: GMP reductase (347 aa).

Residue 108-131 (ADFDKMKQILALSPSLKFICIDVA) participates in NADP(+) binding. K(+) contacts are provided by Gly181 and Gly183. The active-site Thioimidate intermediate is the Cys186. 216-239 (IVSDGGCSVPGDVAKAFGGGADFV) is a binding site for NADP(+).

This sequence belongs to the IMPDH/GMPR family. GuaC type 1 subfamily. As to quaternary structure, homotetramer.

It carries out the reaction IMP + NH4(+) + NADP(+) = GMP + NADPH + 2 H(+). In terms of biological role, catalyzes the irreversible NADPH-dependent deamination of GMP to IMP. It functions in the conversion of nucleobase, nucleoside and nucleotide derivatives of G to A nucleotides, and in maintaining the intracellular balance of A and G nucleotides. The chain is GMP reductase from Yersinia pestis bv. Antiqua (strain Antiqua).